Consider the following 396-residue polypeptide: Fumarate--(S)-2,3-diaminopropanoate ligase (396 aa).

It catalyses the reaction (S)-2,3-diaminopropanoate + fumarate + ATP = N(3)-fumaroyl-(S)-2,3-diaminopropanoate + AMP + diphosphate. The protein operates within antibiotic biosynthesis. In terms of biological role, involved in dapdiamide antibiotics biosynthesis. Ligates fumarate and 2,3-diaminopropionate (DAP) to form N-beta-fumaroyl-DAP. Can also form N-succinoyl-DAP from succinate and DAP, with lower efficiency. The protein is Fumarate--(S)-2,3-diaminopropanoate ligase of Enterobacter agglomerans (Erwinia herbicola).